The following is a 353-amino-acid chain: tRNA N6-adenosine threonylcarbamoyltransferase (353 aa).

The Fe cation site is built by H115 and H119. Residues 138–142 (LVSGG), D171, G184, and N276 contribute to the substrate site. Fe cation is bound at residue D304.

Belongs to the KAE1 / TsaD family. Fe(2+) is required as a cofactor.

The protein resides in the cytoplasm. The enzyme catalyses L-threonylcarbamoyladenylate + adenosine(37) in tRNA = N(6)-L-threonylcarbamoyladenosine(37) in tRNA + AMP + H(+). Functionally, required for the formation of a threonylcarbamoyl group on adenosine at position 37 (t(6)A37) in tRNAs that read codons beginning with adenine. Is involved in the transfer of the threonylcarbamoyl moiety of threonylcarbamoyl-AMP (TC-AMP) to the N6 group of A37, together with TsaE and TsaB. TsaD likely plays a direct catalytic role in this reaction. The sequence is that of tRNA N6-adenosine threonylcarbamoyltransferase from Xanthomonas euvesicatoria pv. vesicatoria (strain 85-10) (Xanthomonas campestris pv. vesicatoria).